The sequence spans 37 residues: Cytochrome b6-f complex subunit 5 (37 aa).

A helical membrane pass occupies residues 5-25; that stretch reads LLSGIVLGLIPITLAGLFVTA.

It belongs to the PetG family. In terms of assembly, the 4 large subunits of the cytochrome b6-f complex are cytochrome b6, subunit IV (17 kDa polypeptide, PetD), cytochrome f and the Rieske protein, while the 4 small subunits are PetG, PetL, PetM and PetN. The complex functions as a dimer.

The protein resides in the plastid. It localises to the chloroplast thylakoid membrane. In terms of biological role, component of the cytochrome b6-f complex, which mediates electron transfer between photosystem II (PSII) and photosystem I (PSI), cyclic electron flow around PSI, and state transitions. PetG is required for either the stability or assembly of the cytochrome b6-f complex. The polypeptide is Cytochrome b6-f complex subunit 5 (Angiopteris evecta (Mule's foot fern)).